Consider the following 556-residue polypeptide: PPE family protein PPE2 (556 aa).

Positions alanine 8–alanine 164 are PPE. Residues glutamine 201 to leucine 256 are SH3-like. Residues leucine 319–leucine 340 form a leucine zipper motif region. Disordered regions lie at residues threonine 385–threonine 418 and glycine 443–glutamate 556. The segment covering proline 400 to valine 417 has biased composition (pro residues). Positions alanine 456 to proline 471 are enriched in low complexity. The span at glutamine 472–glutamine 481 shows a compositional bias: basic residues. The Nuclear localization signal signature appears at arginine 473–glutamine 481.

Belongs to the mycobacterial PPE family.

The protein localises to the secreted. Its subcellular location is the host cytoplasm. It is found in the host nucleus. In terms of biological role, inhibits nitric oxide (NO) production in activated macrophages. Acts by inhibiting expression of the host inducible nitric oxide synthase (iNOS). PPE2 is translocated into the host macrophage nucleus, where it interacts with a GATA-binding site overlapping with the TATA box of NOS2 (iNOS) promoter, and strongly inhibits NOS2 gene transcription. Reduction in NO production in turn facilitates intracellular survival of the bacilli inside the macrophage. In addition, disrupts the assembly of NADPH oxidase complex, which inhibits NADPH oxidase-mediated reactive oxygen species (ROS) generation in macrophages and favors M.tuberculosis survival. Acts by interacting with NCF2, the cytosolic subunit of NADPH oxidase, and preventing translocation of NCF2 and NCF1 to the membrane, which causes a reduction of the functional assembly of NADPH oxidase complex and a decrease in NADPH oxidase activity. In Mycobacterium tuberculosis (strain CDC 1551 / Oshkosh), this protein is PPE family protein PPE2 (PPE2).